The primary structure comprises 800 residues: Putative antiporter subunit mnhA2 (800 aa).

20 helical membrane-spanning segments follow: residues 1–21, 33–53, 78–98, 118–138, 167–187, 207–227, 241–261, 273–293, 300–320, 331–351, 387–407, 424–444, 472–492, 527–547, 595–615, 627–647, 651–671, 676–696, 712–732, and 768–788; these read MSLVYLLIAILVIMAMILLMS, IALVAPVISSIYFLIQIPSVA, GLSLMFSLIISLIGIAVFFYA, LFMFSMIGIVLSDNTILMYIF, FMITVFGGLALLVGFIMLYIM, GLFIPMIFMFLLGAFTKSAQF, TPVSAYLHSATMVKAGIFLLL, YVYIVTFVGLITMLFGSITAL, GILAYSTISQLGMIMAMVGIG, IASIYVFVLFGALFHLMNHAI, LVMTIAALSMAGVPFLNGFLS, FSLISMIAIVFVGVIASVFTF, PWLFSLPSLILMVLVPVIFFV, GFNIPLLLTIIIILLGSVLAI, IIMTLGIFMIIIGYGYIRIGL, GALEIILAIVTVTIGISLIFI, LTMVILNGVIGFVVTLFFIAM, LALTQLVVETITTILFIVSFS, IIKISVSLLMALIVVSLIFIT, and LDTLFEGLVLIITGLGIYTLL.

It belongs to the CPA3 antiporters (TC 2.A.63) subunit A family. As to quaternary structure, may form a heterooligomeric complex that consists of seven subunits: mnhA2, mnhB2, mnhC2, mnhD2, mnhE2, mnhF2 and mnhG2.

The protein localises to the cell membrane. The sequence is that of Putative antiporter subunit mnhA2 (mnhA2) from Staphylococcus aureus (strain MSSA476).